The chain runs to 235 residues: Protein YIP4 (235 aa).

Helical transmembrane passes span 89-109 (ISAN…SLFV), 114-134 (SLFS…ALHL), 145-165 (LISY…NALV), 186-206 (VLSL…VAAV), and 215-235 (IIEI…STIL).

It belongs to the YIP1 family. Interacts with TVP18, TVP23, YIP1 and YIP5. Interacts with SEC4, YPT1, YPT6, YPT7, YPT10, YPT11, YPT31, YPT32 and YPT52; These proteins are all Rab GTPases.

It is found in the golgi apparatus membrane. Functionally, may be involved in proper membrane localization of Rab GTPases. The sequence is that of Protein YIP4 (YIP4) from Saccharomyces cerevisiae (strain ATCC 204508 / S288c) (Baker's yeast).